The following is a 360-amino-acid chain: G-protein coupled receptor 15 (360 aa).

Topologically, residues 1 to 33 (MDPEETSVYLDYYYATSPNSDIRETHSHVPYTS) are extracellular. The helical transmembrane segment at 34–54 (VFLPVFYTAVFLTGVLGNLVL) threads the bilayer. The Cytoplasmic portion of the chain corresponds to 55–69 (MGALHFKPGSRRLID). The chain crosses the membrane as a helical span at residues 70 to 90 (IFIINLAASDFIFLVTLPLWV). At 91 to 120 (DKEASLGLWRTGSFLCKGSSYMISVNMHCS) the chain is on the extracellular side. A helical transmembrane segment spans residues 121 to 141 (VLLLTCMSVDRYLAIVWPVVS). The Cytoplasmic portion of the chain corresponds to 142-149 (RKFRRTDC). Residues 150–170 (AYVVCASIWFISCLLGLPTLL) traverse the membrane as a helical segment. Over 171–192 (SRELTLIDDKPYCAEKKATPIK) the chain is Extracellular. A helical transmembrane segment spans residues 193-213 (LIWSLVALIFTFFVPLLSIVT). At 214 to 239 (CYCCIARKLCAHYQQSGKHNKKLKKS) the chain is on the cytoplasmic side. The helical transmembrane segment at 240-260 (IKIIFIVVAAFLVSWLPFNTF) threads the bilayer. The Extracellular portion of the chain corresponds to 261-284 (KFLAIVSGLRQEHYLPSAILQLGM). The chain crosses the membrane as a helical span at residues 285 to 305 (EVSGPLAFANSCVNPFIYYIF). Over 306-360 (DSYIRRAIVHCLCPCLKNYDFGSSTETSDSHLTKALSTFIHAEDFARRRKRSVSL) the chain is Cytoplasmic. A Phosphoserine modification is found at Ser359.

This sequence belongs to the G-protein coupled receptor 1 family. In terms of assembly, interacts with adapter YWHAE; this interaction promotes ER-to-Golgi transport of GPR15. Interacts with GNAI1; this interaction initiates the signaling pathway. In terms of processing, phosphorylation is necessary for YWHAE binding and efficient surface expression. Post-translationally, O-glycosylated. Sialylated O-glycans in the N-terminal tail inhibits binding of GPR15LG. Sulfation is required for efficient binding of GPR15LG. As to expression, highly expressed in lymphoid tissues, including macrophages and peripheral blood mononuclear cells.

Its subcellular location is the cell membrane. G protein-coupled receptor that plays an important role in immune homeostasis. Acts via its natural ligand GPR15LG, a chemokine-like polypeptide strongly expressed in gastrointestinal tissues. GPR15-GPR15LG signaling axis regulates intestinal homeostasis and inflammation through the migration of immune cells. Controls thereby the specific homing of T-cells, particularly FOXP3+ regulatory T-cells (Tregs), to the large intestine lamina propria. Also required for skin localization of thymus-derived dendritic epidermal T-cells. Plays an important role in mediating cytoprotective function as well as angiogenesis of thrombomodulin. Mechanistically, preferentially signals through the Gi/o pathway to inhibit adenylate cyclase activity and activate a phosphatidylinositol-calcium second messenger system that regulates the release of Ca(2+) ions from intracellular stores. Functionally, (Microbial infection) Acts as an alternative coreceptor with CD4 for HIV-1 infection. In Homo sapiens (Human), this protein is G-protein coupled receptor 15 (GPR15).